Here is a 250-residue protein sequence, read N- to C-terminus: MSVTPSIDAVRDLRAASCGPVGAPSVTSDLSENIILTSLDDLHNWARLSSLWPLLYGTACCFIEFAALIGSRFDFDRFGLVPRSSPRQADLLIVAGTVTMKMAPALVRLYEQMPEPKYVIAMGACTITGGMFSADSTTAVRGVDKLIPVDLYLPGCPPRPEAIFDAVIKLRKKVGDESVAERIKIAQTHRYFTVPHHMKRVEPIVTGAYLSADTQKAALKPGAGLPMAAELNTPEIDVSPASQSSSTYES.

Residues Cys-60, Cys-61, Cys-125, and Cys-156 each coordinate [4Fe-4S] cluster. The interval 230-250 (ELNTPEIDVSPASQSSSTYES) is disordered. Residues 240-250 (PASQSSSTYES) show a composition bias toward polar residues.

It belongs to the complex I 20 kDa subunit family. As to quaternary structure, NDH-1 can be composed of about 15 different subunits; different subcomplexes with different compositions have been identified which probably have different functions. It depends on [4Fe-4S] cluster as a cofactor.

Its subcellular location is the cellular thylakoid membrane. The catalysed reaction is a plastoquinone + NADH + (n+1) H(+)(in) = a plastoquinol + NAD(+) + n H(+)(out). The enzyme catalyses a plastoquinone + NADPH + (n+1) H(+)(in) = a plastoquinol + NADP(+) + n H(+)(out). Its function is as follows. NDH-1 shuttles electrons from an unknown electron donor, via FMN and iron-sulfur (Fe-S) centers, to quinones in the respiratory and/or the photosynthetic chain. The immediate electron acceptor for the enzyme in this species is believed to be plastoquinone. Couples the redox reaction to proton translocation, and thus conserves the redox energy in a proton gradient. Cyanobacterial NDH-1 also plays a role in inorganic carbon-concentration. This Prochlorococcus marinus (strain MIT 9313) protein is NAD(P)H-quinone oxidoreductase subunit K.